Reading from the N-terminus, the 131-residue chain is Glycine cleavage system H protein (131 aa).

Residues 24-106 (IATIGISAFA…YGEGWLLKLR (83 aa)) enclose the Lipoyl-binding domain. N6-lipoyllysine is present on lysine 65.

The protein belongs to the GcvH family. In terms of assembly, the glycine cleavage system is composed of four proteins: P, T, L and H. (R)-lipoate serves as cofactor.

The glycine cleavage system catalyzes the degradation of glycine. The H protein shuttles the methylamine group of glycine from the P protein to the T protein. The chain is Glycine cleavage system H protein from Gloeothece citriformis (strain PCC 7424) (Cyanothece sp. (strain PCC 7424)).